The sequence spans 290 residues: ATP synthase gamma chain (290 aa).

Belongs to the ATPase gamma chain family. As to quaternary structure, F-type ATPases have 2 components, CF(1) - the catalytic core - and CF(0) - the membrane proton channel. CF(1) has five subunits: alpha(3), beta(3), gamma(1), delta(1), epsilon(1). CF(0) has three main subunits: a, b and c.

It is found in the cell inner membrane. Functionally, produces ATP from ADP in the presence of a proton gradient across the membrane. The gamma chain is believed to be important in regulating ATPase activity and the flow of protons through the CF(0) complex. The sequence is that of ATP synthase gamma chain from Anaeromyxobacter sp. (strain Fw109-5).